A 360-amino-acid chain; its full sequence is Phospho-N-acetylmuramoyl-pentapeptide-transferase (360 aa).

10 helical membrane-spanning segments follow: residues 26-46, 73-93, 98-118, 136-156, 168-188, 199-219, 235-255, 263-283, 288-308, and 338-358; these read TILG…AVIQ, TMGG…WADL, VWVV…DDAL, LQVL…TDPV, WVFP…VGSS, GLAI…AYAS, GVGE…GFLW, VFMG…VAVA, IVLF…MIQV, and VIVR…AMLK.

Belongs to the glycosyltransferase 4 family. MraY subfamily. The cofactor is Mg(2+).

The protein resides in the cell inner membrane. The enzyme catalyses UDP-N-acetyl-alpha-D-muramoyl-L-alanyl-gamma-D-glutamyl-meso-2,6-diaminopimeloyl-D-alanyl-D-alanine + di-trans,octa-cis-undecaprenyl phosphate = di-trans,octa-cis-undecaprenyl diphospho-N-acetyl-alpha-D-muramoyl-L-alanyl-D-glutamyl-meso-2,6-diaminopimeloyl-D-alanyl-D-alanine + UMP. Its pathway is cell wall biogenesis; peptidoglycan biosynthesis. Its function is as follows. Catalyzes the initial step of the lipid cycle reactions in the biosynthesis of the cell wall peptidoglycan: transfers peptidoglycan precursor phospho-MurNAc-pentapeptide from UDP-MurNAc-pentapeptide onto the lipid carrier undecaprenyl phosphate, yielding undecaprenyl-pyrophosphoryl-MurNAc-pentapeptide, known as lipid I. This Halorhodospira halophila (strain DSM 244 / SL1) (Ectothiorhodospira halophila (strain DSM 244 / SL1)) protein is Phospho-N-acetylmuramoyl-pentapeptide-transferase.